The primary structure comprises 101 residues: DNA-binding protein Fis (101 aa).

Residues Q77 to K96 constitute a DNA-binding region (H-T-H motif).

The protein belongs to the transcriptional regulatory Fis family. Homodimer.

Its function is as follows. Activates ribosomal RNA transcription. Plays a direct role in upstream activation of rRNA promoters. This Shewanella loihica (strain ATCC BAA-1088 / PV-4) protein is DNA-binding protein Fis.